A 296-amino-acid chain; its full sequence is MDSLEARLQFIQVLKNLQKTLHKTRDSITSSSTTTPPSSQQKLNNDPIQFYLRNYRHHYEDFHQCLFDTTMKMDPLDRLDVVIYYVRIIRNLYPHSHSNTNVTKVLNEVLLMDIDLVFELCLPCQDWKSLTNQATCKELFLDLSKLIHYDATSVTHTPSDTTLIDATTWYSVKTERTTKDYKESLQRTESLLKDRDLKKLAFFQQFNSDTTAINPDLQTQPTNANILLHRMEADRELHKRSKETSWYIERPSNDILDESEFKSLWTHFETTDSGFDKDDYKNIKALNDIAKASYIY.

A disordered region spans residues 25 to 44 (RDSITSSSTTTPPSSQQKLN). Over residues 29-39 (TSSSTTTPPSS) the composition is skewed to low complexity. Phosphothreonine is present on threonine 35.

It belongs to the CTK3 family. In terms of assembly, CTDK-I consists of three subunits, CTK1, CTK2 and CTK3 (also called alpha, beta and gamma). Interacts with CTK1. Heterodimerization with CTK2 is required to protect this subunit from degradation. In terms of processing, ubiquitinated. Ubiquitination leads to degradation by the 26S proteasome pathway.

Its subcellular location is the nucleus. The protein localises to the nucleolus. It localises to the cytoplasm. Gamma subunit of the CTDK-I complex, which hyperphosphorylates the C-terminal heptapeptide repeat domain (CTD) of the largest RNA polymerase II subunit. CTDK-I phosphorylates 'Ser-5' if the CTD substrate is not phosphorylated at 'Ser-5', but will phosphorylate 'Ser-2' of a CTD substrate if 'Ser-5' is already phosphorylated. CTDK-I is also more reactive toward substrates that are prephosphorylated at 'Ser-2' or 'Ser-5' compared with an unphosphorylated CTD substrate, therefore efficiently creating doubly phosphorylated CTD repeats. Involved in RNA polymerase I transcription and RNA polymerase II transcriptional elongation, and as part of the CTDK-I complex, pre-mRNA 3'-end processing and SET2 mediated H3K36 methylation. Together with CTK2, required for CTK1 CTD kinase activation. Required for DNA damage induced transcription. Involved in the adaptation to alternative carbon sources, including galactose, glycerol and ethanol, but not raffinose. Required for the integrity of the rDNA locus. The polypeptide is CTD kinase subunit gamma (CTK3) (Saccharomyces cerevisiae (strain ATCC 204508 / S288c) (Baker's yeast)).